A 465-amino-acid chain; its full sequence is Ribosomal protein uS12 methylthiotransferase RimO (465 aa).

An MTTase N-terminal domain is found at 1–117 (MKVGFISLGC…IVDICEGMPP (117 aa)). [4Fe-4S] cluster is bound by residues Cys10, Cys46, Cys80, Cys150, Cys154, and Cys157. One can recognise a Radical SAM core domain in the interval 136–369 (ATPRHFAYMK…AIQRKIARAR (234 aa)). One can recognise a TRAM domain in the interval 371–442 (RGLVGKEVPV…DYDVVGTLLA (72 aa)).

This sequence belongs to the methylthiotransferase family. RimO subfamily. It depends on [4Fe-4S] cluster as a cofactor.

It localises to the cytoplasm. It carries out the reaction L-aspartate(89)-[ribosomal protein uS12]-hydrogen + (sulfur carrier)-SH + AH2 + 2 S-adenosyl-L-methionine = 3-methylsulfanyl-L-aspartate(89)-[ribosomal protein uS12]-hydrogen + (sulfur carrier)-H + 5'-deoxyadenosine + L-methionine + A + S-adenosyl-L-homocysteine + 2 H(+). Its function is as follows. Catalyzes the methylthiolation of an aspartic acid residue of ribosomal protein uS12. The protein is Ribosomal protein uS12 methylthiotransferase RimO of Solibacter usitatus (strain Ellin6076).